Reading from the N-terminus, the 105-residue chain is Nitrogen fixation nifHD2 region GlnB-like protein 1 (105 aa).

This sequence belongs to the P(II) protein family.

Functionally, could be involved in the regulation of nitrogen fixation. The protein is Nitrogen fixation nifHD2 region GlnB-like protein 1 of Methanosarcina barkeri.